The chain runs to 955 residues: Leucine--tRNA ligase (955 aa).

Positions 51 to 61 match the 'HIGH' region motif; it reads PYLNGVLHAGH. Residues 647 to 651 carry the 'KMSKS' region motif; it reads KLSKS. Lys650 is an ATP binding site.

It belongs to the class-I aminoacyl-tRNA synthetase family.

It localises to the cytoplasm. The enzyme catalyses tRNA(Leu) + L-leucine + ATP = L-leucyl-tRNA(Leu) + AMP + diphosphate. The polypeptide is Leucine--tRNA ligase (Methanococcus maripaludis (strain C5 / ATCC BAA-1333)).